A 129-amino-acid chain; its full sequence is Fluoride-specific ion channel FluC 1 (129 aa).

3 helical membrane passes run 43-63 (ASLL…PAWV), 68-88 (VVSL…TFSY), and 100-120 (LLAA…AALG). Glycine 78 and serine 81 together coordinate Na(+).

Belongs to the fluoride channel Fluc/FEX (TC 1.A.43) family.

The protein localises to the cell membrane. The enzyme catalyses fluoride(in) = fluoride(out). Its activity is regulated as follows. Na(+) is not transported, but it plays an essential structural role and its presence is essential for fluoride channel function. Functionally, fluoride-specific ion channel. Important for reducing fluoride concentration in the cell, thus reducing its toxicity. The sequence is that of Fluoride-specific ion channel FluC 1 from Frankia casuarinae (strain DSM 45818 / CECT 9043 / HFP020203 / CcI3).